The following is a 214-amino-acid chain: Pyridoxine/pyridoxamine 5'-phosphate oxidase (214 aa).

Substrate contacts are provided by residues 8–11 (RINY) and Lys66. Residues 61 to 66 (RIVLIK), 76 to 77 (FT), Arg82, Lys83, and Gln105 each bind FMN. The substrate site is built by Tyr123, Arg127, and Ser131. Residues 140–141 (QS) and Trp184 each bind FMN. 190–192 (RLH) contacts substrate. Arg194 contributes to the FMN binding site.

This sequence belongs to the pyridoxamine 5'-phosphate oxidase family. Homodimer. It depends on FMN as a cofactor.

The enzyme catalyses pyridoxamine 5'-phosphate + O2 + H2O = pyridoxal 5'-phosphate + H2O2 + NH4(+). The catalysed reaction is pyridoxine 5'-phosphate + O2 = pyridoxal 5'-phosphate + H2O2. Its pathway is cofactor metabolism; pyridoxal 5'-phosphate salvage; pyridoxal 5'-phosphate from pyridoxamine 5'-phosphate: step 1/1. It participates in cofactor metabolism; pyridoxal 5'-phosphate salvage; pyridoxal 5'-phosphate from pyridoxine 5'-phosphate: step 1/1. Catalyzes the oxidation of either pyridoxine 5'-phosphate (PNP) or pyridoxamine 5'-phosphate (PMP) into pyridoxal 5'-phosphate (PLP). This chain is Pyridoxine/pyridoxamine 5'-phosphate oxidase, found in Burkholderia ambifaria (strain ATCC BAA-244 / DSM 16087 / CCUG 44356 / LMG 19182 / AMMD) (Burkholderia cepacia (strain AMMD)).